The following is a 459-amino-acid chain: Spermidine/putrescine import ATP-binding protein PotA (459 aa).

An ABC transporter domain is found at 15 to 334 (IELIDIVKQF…PRNIWVAKFI (320 aa)). 47-54 (GPSGSGKT) lines the ATP pocket. The tract at residues 115 to 203 (RVPKENVKKE…EEFKNKYFKR (89 aa)) is insert.

It belongs to the ABC transporter superfamily. Spermidine/putrescine importer (TC 3.A.1.11.1) family. The complex is composed of two ATP-binding proteins (PotA), two transmembrane proteins (PotB and PotC) and a solute-binding protein (PotD).

It localises to the cell membrane. The enzyme catalyses ATP + H2O + polyamine-[polyamine-binding protein]Side 1 = ADP + phosphate + polyamineSide 2 + [polyamine-binding protein]Side 1.. Functionally, part of the ABC transporter complex PotABCD involved in spermidine/putrescine import. Responsible for energy coupling to the transport system. In Mycoplasmopsis synoviae (strain 53) (Mycoplasma synoviae), this protein is Spermidine/putrescine import ATP-binding protein PotA.